A 369-amino-acid chain; its full sequence is N-succinyl-L-Arg/Lys racemase (369 aa).

Substrate is bound by residues Tyr-26, Asp-51, Lys-161 to Lys-163, and Asp-191 to Asn-193. Residues Asp-191, Glu-218, and Asp-243 each contribute to the Mg(2+) site. Residues Lys-267, Ser-295–Met-296, and Glu-320–Thr-322 each bind substrate.

This sequence belongs to the mandelate racemase/muconate lactonizing enzyme family. Mg(2+) serves as cofactor.

Its function is as follows. Catalyzes efficient racemization of N-succinyl-L-Arg and N-succinyl-L-Lys, suggesting that these are physiological substrates of this enzyme. Has low activity with L-Asp-L-Lys, and even lower activity with L-Leu-L-Arg, L-Leu-L-Lys, N-succinyl-L-His and N-succinyl-L-Met (in vitro). This Bacillus cereus (strain ATCC 14579 / DSM 31 / CCUG 7414 / JCM 2152 / NBRC 15305 / NCIMB 9373 / NCTC 2599 / NRRL B-3711) protein is N-succinyl-L-Arg/Lys racemase.